Here is a 183-residue protein sequence, read N- to C-terminus: Ribose 1,5-bisphosphate phosphokinase PhnN (183 aa).

6–13 (GPSGAGKD) contributes to the ATP binding site.

This sequence belongs to the ribose 1,5-bisphosphokinase family.

The catalysed reaction is alpha-D-ribose 1,5-bisphosphate + ATP = 5-phospho-alpha-D-ribose 1-diphosphate + ADP. The protein operates within metabolic intermediate biosynthesis; 5-phospho-alpha-D-ribose 1-diphosphate biosynthesis; 5-phospho-alpha-D-ribose 1-diphosphate from D-ribose 5-phosphate (route II): step 3/3. Its function is as follows. Catalyzes the phosphorylation of ribose 1,5-bisphosphate to 5-phospho-D-ribosyl alpha-1-diphosphate (PRPP). This chain is Ribose 1,5-bisphosphate phosphokinase PhnN, found in Agrobacterium fabrum (strain C58 / ATCC 33970) (Agrobacterium tumefaciens (strain C58)).